Here is a 366-residue protein sequence, read N- to C-terminus: Phenylalanine--tRNA ligase alpha subunit (366 aa).

E264 is a binding site for Mg(2+).

This sequence belongs to the class-II aminoacyl-tRNA synthetase family. Phe-tRNA synthetase alpha subunit type 1 subfamily. In terms of assembly, tetramer of two alpha and two beta subunits. Mg(2+) is required as a cofactor.

Its subcellular location is the cytoplasm. The enzyme catalyses tRNA(Phe) + L-phenylalanine + ATP = L-phenylalanyl-tRNA(Phe) + AMP + diphosphate + H(+). The polypeptide is Phenylalanine--tRNA ligase alpha subunit (Zymomonas mobilis subsp. mobilis (strain ATCC 31821 / ZM4 / CP4)).